A 171-amino-acid chain; its full sequence is Myosin regulatory light chain 12B (171 aa).

Residue threonine 18 is modified to Phosphothreonine; by MLCK and ZIPK/DAPK3. Serine 19 carries the post-translational modification Phosphoserine; by MLCK and ZIPK/DAPK3. EF-hand domains follow at residues 28 to 63, 97 to 132, and 133 to 168; these read SQIQ…LGKN, DPED…MGDR, and FTDE…GAKD. Ca(2+) is bound by residues aspartate 41, asparagine 43, aspartate 45, and aspartate 52.

In terms of assembly, myosin is a hexamer of 2 heavy chains and 4 light chains: interacts with myosin heavy chain MYO19. In terms of processing, phosphorylation increases the actin-activated myosin ATPase activity and thereby regulates the contractile activity. It is required to generate the driving force in the migration of the cells but not necessary for localization of myosin-2 at the leading edge. Phosphorylation is reduced following epigallocatechin-3-O-gallate treatment.

Its function is as follows. Myosin regulatory subunit that plays an important role in regulation of both smooth muscle and nonmuscle cell contractile activity via its phosphorylation. Phosphorylation triggers actin polymerization in vascular smooth muscle. Implicated in cytokinesis, receptor capping, and cell locomotion. The polypeptide is Myosin regulatory light chain 12B (MYL12B) (Bos taurus (Bovine)).